Here is a 233-residue protein sequence, read N- to C-terminus: Hydroxyacylglutathione hydrolase (233 aa).

Residues His52, His54, Asp56, His57, His108, Asp125, and His163 each coordinate Zn(2+).

This sequence belongs to the metallo-beta-lactamase superfamily. Glyoxalase II family. In terms of assembly, monomer. Requires Zn(2+) as cofactor.

It carries out the reaction an S-(2-hydroxyacyl)glutathione + H2O = a 2-hydroxy carboxylate + glutathione + H(+). Its pathway is secondary metabolite metabolism; methylglyoxal degradation; (R)-lactate from methylglyoxal: step 2/2. In terms of biological role, thiolesterase that catalyzes the hydrolysis of S-D-lactoyl-glutathione to form glutathione and D-lactic acid. This is Hydroxyacylglutathione hydrolase from Histophilus somni (strain 2336) (Haemophilus somnus).